A 504-amino-acid polypeptide reads, in one-letter code: Probable cytochrome P450 513E1 (504 aa).

The chain crosses the membrane as a helical span at residues 1 to 21 (MNLYISILILIISLIIFFKNN). C450 is a heme binding site.

Belongs to the cytochrome P450 family. It depends on heme as a cofactor.

The protein localises to the membrane. The polypeptide is Probable cytochrome P450 513E1 (cyp513E1) (Dictyostelium discoideum (Social amoeba)).